Reading from the N-terminus, the 156-residue chain is Low-salt glycan biosynthesis protein Agl8 (156 aa).

Substrate is bound by residues 14 to 15 (RI) and arginine 47. The region spanning 25-156 (ANVPLVSVDL…YVERYLDALD (132 aa)) is the Nudix hydrolase domain. Mg(2+) contacts are provided by glycine 60, glutamate 80, and glutamine 130. The Nudix box motif lies at 61–82 (GTVFKNETLTDALYRVADEELG).

The protein belongs to the Nudix hydrolase family. It depends on Mg(2+) as a cofactor.

The protein operates within protein modification; protein glycosylation. It functions in the pathway cell surface structure biogenesis; S-layer biogenesis. Nudix hydrolase involved in N-glycan biosynthetic pathway that takes place under low-salt conditions (1.75 M instead of 3.4 M). Participates in the formation of the tetrasaccharide present at 'Asn-532' of S-layer glycoprotein Csg, consisting of a sulfated hexose, 2 hexoses and rhamnose. Mediates attachment of sugar 3 in the tetrasaccharide. The polypeptide is Low-salt glycan biosynthesis protein Agl8 (agl8) (Haloferax volcanii (strain ATCC 29605 / DSM 3757 / JCM 8879 / NBRC 14742 / NCIMB 2012 / VKM B-1768 / DS2) (Halobacterium volcanii)).